A 225-amino-acid chain; its full sequence is Orotate phosphoribosyltransferase (225 aa).

Residues R107, K108, K111, and 133 to 141 (EDLTTDGGS) contribute to the 5-phospho-alpha-D-ribose 1-diphosphate site. Orotate is bound at residue T137.

The protein belongs to the purine/pyrimidine phosphoribosyltransferase family. PyrE subfamily. As to quaternary structure, homodimer. The cofactor is Mg(2+).

The catalysed reaction is orotidine 5'-phosphate + diphosphate = orotate + 5-phospho-alpha-D-ribose 1-diphosphate. It participates in pyrimidine metabolism; UMP biosynthesis via de novo pathway; UMP from orotate: step 1/2. Catalyzes the transfer of a ribosyl phosphate group from 5-phosphoribose 1-diphosphate to orotate, leading to the formation of orotidine monophosphate (OMP). In Roseobacter denitrificans (strain ATCC 33942 / OCh 114) (Erythrobacter sp. (strain OCh 114)), this protein is Orotate phosphoribosyltransferase.